The chain runs to 536 residues: Pre-mRNA-splicing regulator female-lethal(2)D (536 aa).

Residues 1–91 (MSVAAMTMDD…LQQQQQQQQQ (91 aa)) are disordered. A compositionally biased stretch (low complexity) spans 28–39 (QNLNILNSSQNS). A compositionally biased stretch (basic residues) spans 57–69 (HHHHHPHPHHHHH). Over residues 72–91 (QQQQQQQQQHLQQQQQQQQQ) the composition is skewed to low complexity. The stretch at 254 to 319 (KSFSEEVKKS…KQAIKDEVVA (66 aa)) forms a coiled coil. Residues 424–450 (APRTLPPKKSKLRGITTRRNSQLEEDH) are disordered.

Belongs to the fl(2)d family. In terms of assembly, component of the WMM complex, a N6-methyltransferase complex composed of a catalytic subcomplex, named MAC, and of an associated subcomplex, named MACOM. The MAC subcomplex is composed of Ime4/Mettl3 and Mettl14. The MACOM subcomplex is composed of fl(2)d, Flacc/Xio, Hakai, vir, and, in some cases of nito. Interacts with vir and msk. Part of a complex containing fl(2)d, Sxl and vir.

The protein localises to the nucleus. Functionally, associated component of the WMM complex, a complex that mediates N6-methyladenosine (m6A) methylation of mRNAs, a modification that plays a role in the efficiency of mRNA splicing and is required for sex determination. Required for sex determination and dosage compensation via Sxl alternative splicing: m6A methylation acts as a key regulator of Sxl pre-mRNA and promotes female-specific alternative splicing of Sxl, which determines female physiognomy. M6A methylation is also required for neuronal functions. Required for proper inclusion of regulated exons in Ubx transcripts, leading to isoforms Ia/b and IIa/b. The protein is Pre-mRNA-splicing regulator female-lethal(2)D of Drosophila melanogaster (Fruit fly).